We begin with the raw amino-acid sequence, 135 residues long: Large ribosomal subunit protein uL16c (135 aa).

It belongs to the universal ribosomal protein uL16 family. As to quaternary structure, part of the 50S ribosomal subunit.

Its subcellular location is the plastid. It localises to the chloroplast. The chain is Large ribosomal subunit protein uL16c from Panax ginseng (Korean ginseng).